A 46-amino-acid chain; its full sequence is Spectrin alpha chain, non-erythrocytic 1 (46 aa).

Spectrin repeat units follow at residues 1 to 5 (AQLAD), 7 to 14 (FHLQQFFR), 15 to 20 (SQLLGS), 21 to 26 (AHEVQR), 27 to 35 (LAQFVEHWK), and 39 to 46 (DLFLTFAK).

This sequence belongs to the spectrin family. In terms of assembly, associates with the gamma-tubulin complex in brain, but not in kidney, liver, sperm, or uterus. Like erythrocyte spectrin, the spectrin-like proteins are capable of forming dimers which can further associate to tetramers. Interacts with isoform 1 of ACP1. Interacts with CALM and EMD. Interacts (via C-terminal spectrin repeats) with TRPC4. Identified in a complex with ACTN4, CASK, IQGAP1, MAGI2, NPHS1 and SPTBN1. Interacts with CLN3; this interaction regulates the fodrin localization at the plasma membrane.

The protein resides in the cytoplasm. The protein localises to the cytoskeleton. Its subcellular location is the cell cortex. Fodrin, which seems to be involved in secretion, interacts with calmodulin in a calcium-dependent manner and is thus candidate for the calcium-dependent movement of the cytoskeleton at the membrane. The sequence is that of Spectrin alpha chain, non-erythrocytic 1 (SPTAN1) from Capra hircus (Goat).